Reading from the N-terminus, the 760-residue chain is Striatin-4 (760 aa).

Residues 1–65 (MMEERAAAAV…PTAGPEPLSL (65 aa)) form a disordered region. The span at 7-35 (AAAVASAASSCRPLGSGTAPNPTAAAPAS) shows a compositional bias: low complexity. The segment covering 43–54 (PVGKGGGGGGSP) has biased composition (gly residues). Serine 53 carries the post-translational modification Phosphoserine. Positions 69–136 (LHFIQHEWAR…QERAKYHKLK (68 aa)) form a coiled coil. The caveolin-binding stretch occupies residues 71-79 (FIQHEWARF). A calmodulin-binding region spans residues 165–182 (ENSPLVWKEGRQLLRQYL). 3 positions are modified to phosphoserine: serine 206, serine 223, and serine 276. 2 disordered regions span residues 210 to 233 (NGAGEPVEGAPRASPGPGGLSGGE) and 272 to 346 (EDED…PHEL). Acidic residues-rich tracts occupy residues 272–283 (EDEDSDEDDELD) and 302–317 (EMEDEDEEDDSEDAIN). Residues 332–346 (PDPRRCTSEGNPHEL) show a composition bias toward basic and acidic residues. WD repeat units lie at residues 443–482 (SHYDGIRSLAFHHSQSALLTASEDGTLKLWNLQKAVTAKK), 496–535 (AHRGPVLAVTMGSNSEYCYSGGADARIHSWKIPDLNMDPY), 549–588 (GHGDAVWGLAFSPTSQRLASCSADGTVRIWDPSSSGPSCL), 595–635 (GEHG…ALLT), 642–681 (SGPAQINQVVSHPSQPLTITAHDDRGIRFLDNRTGKSVHS), 684–723 (AHLDAVTCLAVDPNGVFLMSGSHDCSLRLWSLDNKTCVQE), and 730–759 (KHEEAIHAVACHPSKALIASAGADALAKVF).

It belongs to the WD repeat striatin family. As to quaternary structure, part of the core of STRIPAK complexes composed of PP2A catalytic and scaffolding subunits, the striatins (PP2A regulatory subunits), the striatin-associated proteins MOB4, STRIP1 and STRIP2, PDCD10 and members of the STE20 kinases, such as STK24 and STK26. Interacts with CTTNBP2NL. In terms of tissue distribution, mainly expressed in brain but is also expressed at low levels in the kidney.

It is found in the cytoplasm. Its subcellular location is the membrane. The protein resides in the cell projection. It localises to the dendritic spine. Calmodulin-binding scaffolding protein which is the center of the striatin-interacting phosphatase and kinase (STRIPAK) complexes. STRIPAK complexes have critical roles in protein (de)phosphorylation and are regulators of multiple signaling pathways including Hippo, MAPK, nuclear receptor and cytoskeleton remodeling. Different types of STRIPAK complexes are involved in a variety of biological processes such as cell growth, differentiation, apoptosis, metabolism and immune regulation. Key regulator of the expanded Hippo signaling pathway by interacting and allowing the inhibition of MAP4K kinases by the STRIPAK complex. This is Striatin-4 (Strn4) from Mus musculus (Mouse).